Here is a 393-residue protein sequence, read N- to C-terminus: Double-stranded RNA-binding protein 5 (393 aa).

DRBM domains are found at residues 1–70 (MYKN…VLSS) and 87–155 (IYKN…SLKK). Disordered regions lie at residues 220 to 251 (ASSSSSTSTPNQHKNSSFISLIPPPPPPKSSK) and 335 to 371 (NPNLNPSSLSSSVNEFTSSNNSCSVLNTPGLGGQEKK). The segment covering 347–361 (VNEFTSSNNSCSVLN) has biased composition (polar residues).

Heterodimer with DRB1, DRB2 or DRB4. Interacts with DCL1 and DCL3. As to expression, expressed in the shoot apical meristem (SAM).

Functionally, binds double-stranded RNA. May be involved in RNA-mediated silencing. This is Double-stranded RNA-binding protein 5 (DRB5) from Arabidopsis thaliana (Mouse-ear cress).